Here is a 440-residue protein sequence, read N- to C-terminus: Oligodendrocyte-myelin glycoprotein (440 aa).

Residues 1–24 form the signal peptide; that stretch reads MEYQILKMSLCLFILLFLTPGILC. The 31-residue stretch at 25 to 55 folds into the LRRNT domain; that stretch reads ICPLQCICTERHRHVDCSGRNLSTLPSGLQE. N-linked (GlcNAc...) asparagine glycans are attached at residues asparagine 45 and asparagine 61. LRR repeat units lie at residues 56-77, 79-100, 101-121, 124-145, 147-168, 169-189, 192-213, and 216-239; these read NIIH…LTQY, NLRT…LPRS, LWNM…DTAY, NLKY…KNTL, SLEV…MPSK, LHIV…TLIN, NLTH…SFDQ, and QLQE…TYLL. A glycan (N-linked (GlcNAc...) asparagine) is linked at asparagine 103. Asparagine 152, asparagine 176, asparagine 189, asparagine 192, and asparagine 234 each carry an N-linked (GlcNAc...) asparagine glycan. 5 Ser/Thr-rich repeats span residues 229-270, 271-292, 293-335, 336-377, and 378-416; these read CDHK…YPTP, SGFT…INSL, SVVT…VPYP, EDTS…SPTP, and MTLS…TPLP. Asparagine 364 and asparagine 389 each carry an N-linked (GlcNAc...) asparagine glycan. Serine 417 carries the GPI-anchor amidated serine lipid modification. Residues 418-440 constitute a propeptide, removed in mature form; sequence VANAWKVNASFLLLLNVVVMLAV. Residue asparagine 425 is glycosylated (N-linked (GlcNAc...) asparagine).

Binds to RTN4R. O-glycosylated in its Ser/Thr-rich repeat domain. In terms of tissue distribution, oligodendrocytes and myelin of the central nervous system.

The protein resides in the cell membrane. Functionally, cell adhesion molecule contributing to the interactive process required for myelination in the central nervous system. The sequence is that of Oligodendrocyte-myelin glycoprotein (OMG) from Homo sapiens (Human).